The sequence spans 312 residues: Terpene synthase 8 (312 aa).

Residues 96-101 (DDYIYE) carry the DDxx(x)D/E motif motif. An NDxxSxxxD/E motif motif is present at residues 224–232 (NDCGSFKME).

This sequence belongs to the terpene synthase family.

The enzyme catalyses (2E,6E)-farnesyl diphosphate + H2O = discoidol + diphosphate. Its pathway is sesquiterpene biosynthesis. Functionally, terpene synthase; part of the gene cluster that mediates the biosynthesis of the trisnorsesquiterpene discodiene which has a function during later stages of multicellular development, during the transition from fingers to Mexican hats. The terpene synthase tps8 converts its substrate farnesyl diphosphate (FDP) into the bicyclic sesquiterpene alcohol discoidol. The cytochrome P450 monooxygenase cyp521A1 then catalyzes the oxidative degradation of discoidol to form the trisnorsesquiterpene discodiene. The protein is Terpene synthase 8 of Dictyostelium discoideum (Social amoeba).